We begin with the raw amino-acid sequence, 210 residues long: MSNEDFILNAEARDVSGKGASRRLRREAGLVPAIVYGGRKNPQNVTITLRELTKHLENEAFYSHIITLNIGDSSEQVILKDLQRHPATNFAMHADFLRVSKTKKFNTKVPLHFINEATSKGVKEQGGKVQHSMTELEIACLPADLPEFIEVDLANVELGGIVHISDIVLPKGVESIALQQGEDHDLPVASIFKPKGVAGDEDEEAEGDAE.

The protein belongs to the bacterial ribosomal protein bL25 family. CTC subfamily. Part of the 50S ribosomal subunit; part of the 5S rRNA/L5/L18/L25 subcomplex. Contacts the 5S rRNA. Binds to the 5S rRNA independently of L5 and L18.

This is one of the proteins that binds to the 5S RNA in the ribosome where it forms part of the central protuberance. The chain is Large ribosomal subunit protein bL25 from Saccharophagus degradans (strain 2-40 / ATCC 43961 / DSM 17024).